Here is a 314-residue protein sequence, read N- to C-terminus: MDNRKRLAYAIIQFLHGQLRHGGLSSDAQESLEVAIQCLETAFGVTLEDSDLALPQTLPEIFEAATASKEMPQDPRGPDRTPPSEEDSAEAERLKTEGNEQMKLENFEAAVHLYGKAIELNPANAVYFCNRAAAYSKLGNYVGAVQDCERAIGIDPGYSKAYGRMGLALSSLNKHAEAVAYYKKALELDPDNDTYKSNLKIAELKLREAPSPTGGVGSLDIAGLLNNPHFITMASSLMNSPQLQQLMSGMISGGHNPLGTPGSSPQHSDLASLIQAGQQFAQQMQQQNPEFVEQIRSQVVRSRTPSASHEEQQE.

Residues 65–99 (ATASKEMPQDPRGPDRTPPSEEDSAEAERLKTEGN) are disordered. Over residues 71 to 83 (MPQDPRGPDRTPP) the composition is skewed to basic and acidic residues. Thr81 carries the phosphothreonine modification. Position 84 is a phosphoserine (Ser84). A compositionally biased stretch (basic and acidic residues) spans 90–99 (EAERLKTEGN). 3 TPR repeats span residues 91-124 (AERL…NPAN), 125-158 (AVYF…DPGY), and 159-192 (SKAY…DPDN). Lys137 carries the post-translational modification N6-acetyllysine. The tract at residues 249–268 (GMISGGHNPLGTPGSSPQHS) is disordered. Residue Ser302 is modified to Phosphoserine. Thr304 is modified (phosphothreonine). Residue Ser306 is modified to Phosphoserine.

The protein belongs to the SGT family. In terms of assembly, homodimer. Homooligomer. Interacts with DNAJC5 and DNAJC5B. Interacts (via TPR repeats) with HSP90AA1. Interacts (via Gln-rich region) with SLC2A1. Interacts with HSP90AB1. Interacts (via TPR repeats) with HSPA8/Hsc70; the interaction is direct. Interacts with BAG6 (via ubiquitin-like domain); interaction prevents interaction between BAG6 and RNF126. Forms a multiprotein complex, at least composed of DNAJB12, DNAJB14, HSPA8/Hsc70 and SGTA; interaction with DNAJB14 and HSPA8/Hsc70 is direct. As to quaternary structure, (Microbial infection) Interacts with NS1 from parvovirus H-1. In terms of tissue distribution, ubiquitously expressed.

The protein localises to the cytoplasm. The protein resides in the nucleus. Functionally, co-chaperone that binds misfolded and hydrophobic patches-containing client proteins in the cytosol. Mediates their targeting to the endoplasmic reticulum but also regulates their sorting to the proteasome when targeting fails. Functions in tail-anchored/type II transmembrane proteins membrane insertion constituting with ASNA1 and the BAG6 complex a targeting module. Functions upstream of the BAG6 complex and ASNA1, binding more rapidly the transmembrane domain of newly synthesized proteins. It is also involved in the regulation of the endoplasmic reticulum-associated misfolded protein catabolic process via its interaction with BAG6: collaborates with the BAG6 complex to maintain hydrophobic substrates in non-ubiquitinated states. Competes with RNF126 for interaction with BAG6, preventing the ubiquitination of client proteins associated with the BAG6 complex. Binds directly to HSC70 and HSP70 and regulates their ATPase activity. In Rattus norvegicus (Rat), this protein is Small glutamine-rich tetratricopeptide repeat-containing protein alpha (Sgta).